Here is a 119-residue protein sequence, read N- to C-terminus: Protein FATTY ACID EXPORT 5 (119 aa).

3 consecutive transmembrane segments (helical) span residues 27–47, 57–77, and 85–105; these read SIASLAGGAGTGLLVVLAGFI, TSLLATLLETVIAAALTFVMG, and KIMPAALVAGISALMTCFYVY.

The protein belongs to the TMEM14 family.

It localises to the membrane. In terms of biological role, may be involved in free fatty acids export. The protein is Protein FATTY ACID EXPORT 5 of Arabidopsis thaliana (Mouse-ear cress).